The primary structure comprises 302 residues: Decaprenyl-phosphate phosphoribosyltransferase (302 aa).

5-phospho-alpha-D-ribose 1-diphosphate is bound at residue K28. The next 2 helical transmembrane spans lie at 30-50 (VLVL…DYVE) and 55-75 (VSMA…VNDV). Y70 is a binding site for 5-phospho-alpha-D-ribose 1-diphosphate. 2 residues coordinate Mg(2+): N73 and D77. 5-phospho-alpha-D-ribose 1-diphosphate is bound at residue K87. 2 helical membrane passes run 100–120 (WLAY…AWML) and 122–142 (PNLA…CFGL). K143 and R160 together coordinate 5-phospho-alpha-D-ribose 1-diphosphate. 2 consecutive transmembrane segments (helical) span residues 146–166 (AVVE…AGGV) and 170–190 (IPLS…MVAG). A trans,octa-cis-decaprenyl phosphate-binding site is contributed by K191. The next 3 helical transmembrane spans lie at 218–238 (LRFV…LWAF), 244–264 (SGSW…RYAV), and 282–302 (RVLQ…VAFG).

This sequence belongs to the UbiA prenyltransferase family. DPPR synthase subfamily. As to quaternary structure, homotrimer. Mg(2+) serves as cofactor.

The protein localises to the cell inner membrane. The enzyme catalyses trans,octa-cis-decaprenyl phosphate + 5-phospho-alpha-D-ribose 1-diphosphate + H(+) = trans,octa-cis-decaprenylphospho-beta-D-ribofuranose 5-phosphate + diphosphate. It functions in the pathway cell wall biogenesis; cell wall polysaccharide biosynthesis. In terms of biological role, involved in the biosynthesis of decaprenylphosphoryl arabinose (DPA) a precursor for arabinan synthesis in mycobacterial cell wall biosynthesis. Catalyzes the transfer of a 5-phosphoribosyl residue from phosphoribose diphosphate (PRPP) to decaprenyl phosphate (DP) to form decaprenylphosphoryl-5-phosphoribose (DPPR). The polypeptide is Decaprenyl-phosphate phosphoribosyltransferase (Mycobacterium tuberculosis (strain CDC 1551 / Oshkosh)).